The primary structure comprises 520 residues: Type I restriction enzyme EcoR124I/EcoR124II methylase subunit (520 aa).

Residues 10 to 190 form an N-terminal domain region; it reads AELHRQIWQI…YEFLISNYAA (181 aa). S-adenosyl-L-methionine contacts are provided by residues 198–203, 230–232, and E254; these read EFFTPQ and SGS. The interval 198-473 is catalytic domain; sequence EFFTPQHVSK…NDYNLSVSSY (276 aa). A C-terminal tail region spans residues 481 to 510; the sequence is EIIDIAELNAELKTTVSKIDQLRKDIDAIV.

The protein belongs to the N(4)/N(6)-methyltransferase family. In terms of assembly, the type I restriction/modification system is composed of three polypeptides R, M and S; the restriction enzyme has stoichiometry R(2)M(2)S(1) while the methyltransferase is M(2)S(1). There is an equilibrium between R(2)M(2)S(1) and R(1)M(2)S(1); the latter is methylation and translocation proficient but restriction deficient. As to quaternary structure, (Microbial infection) Holoenenzyme interacts with Escherichia phage T7 protein Ocr; this interaction leads to the inhibition of the restriction activity, but may still allow methylation and translocation.

The catalysed reaction is a 2'-deoxyadenosine in DNA + S-adenosyl-L-methionine = an N(6)-methyl-2'-deoxyadenosine in DNA + S-adenosyl-L-homocysteine + H(+). In terms of biological role, the subtype gamma methyltransferase (M) subunit of a type I restriction enzyme. The M and S subunits together form a methyltransferase (MTase) that methylates A-3 on the top and bottom strand of the sequence 5'-GAAN(6)RTCG-3' (for EcoR124I) and 5'-GAAN(7)RTCG-3' (for EcoR124II). In the presence of the R subunit the complex can also act as an endonuclease, binding to the same target sequence but cutting the DNA some distance from this site. Whether the DNA is cut or modified depends on the methylation state of the target sequence. When the target site is unmodified, the DNA is cut. When the target site is hemimethylated, the complex acts as a maintenance MTase modifying the DNA so that both strands become methylated. After locating a non-methylated recognition site, the enzyme complex serves as a molecular motor that translocates DNA in an ATP-dependent manner until a collision occurs that triggers cleavage. The R(1)M(2)S(1) complex translocates an average of 555 bp/second on nicked DNA; the R(2)M(2)S(1) complex translocates at double that speed. The 2 R subunit motors are independent and track along the helical pitch of the DNA, inducing positive supercoiling ahead of themselves. This chain is Type I restriction enzyme EcoR124I/EcoR124II methylase subunit (hsdM), found in Escherichia coli.